The following is a 242-amino-acid chain: Probable transcriptional regulatory protein Dred_1658 (242 aa).

It belongs to the TACO1 family.

It is found in the cytoplasm. The protein is Probable transcriptional regulatory protein Dred_1658 of Desulforamulus reducens (strain ATCC BAA-1160 / DSM 100696 / MI-1) (Desulfotomaculum reducens).